A 338-amino-acid polypeptide reads, in one-letter code: tRNA N6-adenosine threonylcarbamoyltransferase (338 aa).

2 residues coordinate Fe cation: H114 and H118. Substrate is bound by residues 136 to 140 (LVSGG), D169, G182, D186, and N275. D301 contacts Fe cation.

The protein belongs to the KAE1 / TsaD family. Requires Fe(2+) as cofactor.

It is found in the cytoplasm. The catalysed reaction is L-threonylcarbamoyladenylate + adenosine(37) in tRNA = N(6)-L-threonylcarbamoyladenosine(37) in tRNA + AMP + H(+). In terms of biological role, required for the formation of a threonylcarbamoyl group on adenosine at position 37 (t(6)A37) in tRNAs that read codons beginning with adenine. Is involved in the transfer of the threonylcarbamoyl moiety of threonylcarbamoyl-AMP (TC-AMP) to the N6 group of A37, together with TsaE and TsaB. TsaD likely plays a direct catalytic role in this reaction. In Streptococcus equi subsp. equi (strain 4047), this protein is tRNA N6-adenosine threonylcarbamoyltransferase.